The sequence spans 228 residues: 3,4-dihydroxy-2-butanone 4-phosphate synthase (228 aa).

D-ribulose 5-phosphate-binding positions include 37–38, aspartate 42, 150–154, and glutamate 174; these read RE and RPGHT. Position 38 (glutamate 38) interacts with Mg(2+). Histidine 153 lines the Mg(2+) pocket.

Belongs to the DHBP synthase family. As to quaternary structure, homodimer. Requires Mg(2+) as cofactor. The cofactor is Mn(2+).

It carries out the reaction D-ribulose 5-phosphate = (2S)-2-hydroxy-3-oxobutyl phosphate + formate + H(+). It participates in cofactor biosynthesis; riboflavin biosynthesis; 2-hydroxy-3-oxobutyl phosphate from D-ribulose 5-phosphate: step 1/1. Catalyzes the conversion of D-ribulose 5-phosphate to formate and 3,4-dihydroxy-2-butanone 4-phosphate. This is 3,4-dihydroxy-2-butanone 4-phosphate synthase from Chloroherpeton thalassium (strain ATCC 35110 / GB-78).